The following is a 566-amino-acid chain: Viral IRF3-like protein (566 aa).

Disordered stretches follow at residues 151–170 (PRPF…PAFC) and 176–236 (QTGA…VHTD).

The protein belongs to the IRF family. In terms of assembly, interacts with host SKP2. Interacts with host USP7.

Plays a role in the inhibition of host immune response. Interferes with the transactivating potential of cellular IRFs IRF3 and IRF7 that play a critical role in the induction of IFNA and IFNB genes. Additionally, interferes with surface major histocompatibility complex class II (MHC-II) antigen presentation. In Human herpesvirus 8 type P (isolate GK18) (HHV-8), this protein is Viral IRF3-like protein (vIRF-3).